The following is a 290-amino-acid chain: MFKGSIVALVTPFRDGAVDEETLRRMVDYQIENGTDGISPCGTTGEASTLDYDEHMRVIEIVIQQVNGRVPVIAGTGSNSTTEAIELSRKAKKLGADGVLLVSPYYNKPSQEGLYRHFRAIADAVDIPQVLYNVPGRTGVNMLPQTVARLAEHDSIVAIKEATGSLQQASELMEMCGDKIDVISGDDFITFPMMACGATGVISVVANIMPREVARLVDAFYEGDMDEARRLHLSLLNISNAMFIETNPVPVKTAAALMGLCAEELRLPLAPLGDASRATLCAVMKSYGLI.

T44 lines the pyruvate pocket. Y132 functions as the Proton donor/acceptor in the catalytic mechanism. K160 serves as the catalytic Schiff-base intermediate with substrate. A pyruvate-binding site is contributed by I202.

It belongs to the DapA family. Homotetramer; dimer of dimers.

It is found in the cytoplasm. It carries out the reaction L-aspartate 4-semialdehyde + pyruvate = (2S,4S)-4-hydroxy-2,3,4,5-tetrahydrodipicolinate + H2O + H(+). It participates in amino-acid biosynthesis; L-lysine biosynthesis via DAP pathway; (S)-tetrahydrodipicolinate from L-aspartate: step 3/4. Its function is as follows. Catalyzes the condensation of (S)-aspartate-beta-semialdehyde [(S)-ASA] and pyruvate to 4-hydroxy-tetrahydrodipicolinate (HTPA). The chain is 4-hydroxy-tetrahydrodipicolinate synthase from Pelobacter propionicus (strain DSM 2379 / NBRC 103807 / OttBd1).